Here is a 185-residue protein sequence, read N- to C-terminus: Ribosome-recycling factor (185 aa).

A disordered region spans residues 163-185; that stretch reads LTNEATKKIDAISKDKEKEITEG. Over residues 167–185 the composition is skewed to basic and acidic residues; sequence ATKKIDAISKDKEKEITEG.

This sequence belongs to the RRF family.

Its subcellular location is the cytoplasm. In terms of biological role, responsible for the release of ribosomes from messenger RNA at the termination of protein biosynthesis. May increase the efficiency of translation by recycling ribosomes from one round of translation to another. This is Ribosome-recycling factor from Latilactobacillus sakei subsp. sakei (strain 23K) (Lactobacillus sakei subsp. sakei).